The chain runs to 392 residues: Ribosomal RNA large subunit methyltransferase G (392 aa).

The protein belongs to the methyltransferase superfamily. RlmG family.

The protein localises to the cytoplasm. The enzyme catalyses guanosine(1835) in 23S rRNA + S-adenosyl-L-methionine = N(2)-methylguanosine(1835) in 23S rRNA + S-adenosyl-L-homocysteine + H(+). Functionally, specifically methylates the guanine in position 1835 (m2G1835) of 23S rRNA. In Shewanella frigidimarina (strain NCIMB 400), this protein is Ribosomal RNA large subunit methyltransferase G.